The chain runs to 344 residues: Protein L-Myc-1-B (344 aa).

Polar residues-rich tracts occupy residues 104 to 113 (GSPRVTNTQK) and 213 to 223 (NTMSPQHNFHS). Disordered regions lie at residues 104 to 162 (GSPR…EDEI) and 208 to 271 (LPPE…YLER). The span at 259–270 (DLAKRKNHNYLE) shows a compositional bias: basic and acidic residues. The 53-residue stretch at 261–313 (AKRKNHNYLERKRRNDLRSRFLALREEVPSLSRSTKTPKVVVLSKATEFLKGL) folds into the bHLH domain. The tract at residues 313–341 (LVIQEQQLTAEKLKLWSRHQQLLRRISQL) is leucine-zipper.

In terms of assembly, efficient DNA binding requires dimerization with another bHLH protein. Binds DNA as a heterodimer with MAX. High levels in oocytes, modest levels in kidney and low levels in spleen.

It localises to the nucleus. The polypeptide is Protein L-Myc-1-B (mycl1-b) (Xenopus laevis (African clawed frog)).